A 234-amino-acid chain; its full sequence is RNA-binding protein pno1 (234 aa).

A disordered region spans residues 1–39 (MPTQDSAAKQADDGFQLVQKKSRKRKMTMDMDDADPKAG). Residues 158-207 (LARCIGRLAGKGGRTKFTIENVTKTRIVLADSKVHILGSYQNIRAARTAL) enclose the KH domain.

Belongs to the PNO1 family.

The protein resides in the nucleus. The protein localises to the nucleolus. The chain is RNA-binding protein pno1 from Ixodes scapularis (Black-legged tick).